The primary structure comprises 813 residues: UPF0508 protein KLLA0A06237g (813 aa).

A disordered region spans residues 478–537; the sequence is KKDKSKSQKNSTDSLAKLSDTKSIHPPESAMSSHASTPSSTSKSSKSSKSSSTLSPSTCK. The span at 506 to 537 shows a compositional bias: low complexity; that stretch reads SAMSSHASTPSSTSKSSKSSKSSSTLSPSTCK.

It belongs to the UPF0508 family.

This chain is UPF0508 protein KLLA0A06237g, found in Kluyveromyces lactis (strain ATCC 8585 / CBS 2359 / DSM 70799 / NBRC 1267 / NRRL Y-1140 / WM37) (Yeast).